Here is a 426-residue protein sequence, read N- to C-terminus: 6-Hydroxy-7-prenyldeoxybrevianamide E synthase notC (426 aa).

Residue Glu94 coordinates substrate. 3 residues coordinate dimethylallyl diphosphate: Arg105, Lys191, and Tyr193. Residue Tyr195 participates in substrate binding. Residues Lys267, Tyr269, Gln352, Tyr354, Tyr418, and Tyr422 each contribute to the dimethylallyl diphosphate site.

Belongs to the tryptophan dimethylallyltransferase family.

The catalysed reaction is 6-hydroxydeoxybrevianamide E + dimethylallyl diphosphate = notoamide S + diphosphate. It functions in the pathway alkaloid biosynthesis. With respect to regulation, addition of 5 mM Mg(2+), Ca(2+) or Mn(2+) slightly enhances catalysis (about 100-120%). Significant reduction of enzyme activity (2%-35%) is observed with Cu(2+), Zn(2+), Fe(2+), or Sn(2+) (5 mM). Its function is as follows. Prenyltransferase; part of the gene cluster that mediates the biosynthesis of notoamide, a fungal indole alkaloid that belongs to a family of natural products containing a characteristic bicyclo[2.2.2]diazaoctane core. The first step of notoamide biosynthesis involves coupling of L-proline and L-tryptophan by the bimodular NRPS notE, to produce cyclo-L-tryptophan-L-proline called brevianamide F. The reverse prenyltransferase notF then acts as a deoxybrevianamide E synthase and converts brevianamide F to deoxybrevianamide E via reverse prenylation at C-2 of the indole ring leading to the bicyclo[2.2.2]diazaoctane core. Deoxybrevianamide E is further hydroxylated at C-6 of the indole ring, likely catalyzed by the cytochrome P450 monooxygenase notG, to yield 6-hydroxy-deoxybrevianamide E. 6-hydroxy-deoxybrevianamide E is a specific substrate of the prenyltransferase notC for normal prenylation at C-7 to produce 6-hydroxy-7-prenyl-deoxybrevianamide, also called notoamide S. As the proposed pivotal branching point in notoamide biosynthesis, notoamide S can be diverted to notoamide E through an oxidative pyran ring closure putatively catalyzed by either notH cytochrome P450 monooxygenase or the notD FAD-linked oxidoreductase. This step would be followed by an indole 2,3-epoxidation-initiated pinacol-like rearrangement catalyzed by the notB FAD-dependent monooxygenase leading to the formation of notoamide C and notoamide D. On the other hand notoamide S is converted to notoamide T by notH (or notD), a bifunctional oxidase that also functions as the intramolecular Diels-Alderase responsible for generation of (+)-notoamide T. To generate antipodal (-)-notoaminide T, notH' (or notD') in Aspergillus versicolor is expected to catalyze a Diels-Alder reaction leading to the opposite stereochemistry. The remaining oxidoreductase notD (or notH) likely catalyzes the oxidative pyran ring formation to yield (+)-stephacidin A. The FAD-dependent monooxygenase notI is highly similar to notB and is predicted to catalyze a similar conversion from (+)-stephacidin A to (-)-notoamide B via the 2,3-epoxidation of (+)-stephacidin A followed by a pinacol-type rearrangement. Finally, it remains unclear which enzyme could be responsible for the final hydroxylation steps leading to notoamide A and sclerotiamide. The chain is 6-Hydroxy-7-prenyldeoxybrevianamide E synthase notC from Aspergillus sp. (strain MF297-2).